The chain runs to 130 residues: Small ribosomal subunit protein uS9 (130 aa).

The protein belongs to the universal ribosomal protein uS9 family.

This Halalkalibacterium halodurans (strain ATCC BAA-125 / DSM 18197 / FERM 7344 / JCM 9153 / C-125) (Bacillus halodurans) protein is Small ribosomal subunit protein uS9.